A 470-amino-acid chain; its full sequence is Pyruvate kinase I (470 aa).

Arginine 32 serves as a coordination point for substrate. The K(+) site is built by asparagine 34, serine 36, aspartate 66, and threonine 67. 34–37 (NFSH) is an ATP binding site. Residue arginine 73 participates in ATP binding. Lysine 76 carries the N6-acetyllysine modification. Lysine 156 is an ATP binding site. Position 222 (glutamate 222) interacts with Mg(2+). Substrate-binding residues include glycine 245, aspartate 246, and threonine 278. Aspartate 246 contacts Mg(2+). An N6-acetyllysine modification is found at lysine 319.

The protein belongs to the pyruvate kinase family. In terms of assembly, homotetramer. The cofactor is Mg(2+). K(+) serves as cofactor.

It carries out the reaction pyruvate + ATP = phosphoenolpyruvate + ADP + H(+). Its pathway is carbohydrate degradation; glycolysis; pyruvate from D-glyceraldehyde 3-phosphate: step 5/5. In Escherichia coli O157:H7, this protein is Pyruvate kinase I (pykF).